The primary structure comprises 442 residues: Probable glycine dehydrogenase (decarboxylating) subunit 1 (442 aa).

It belongs to the GcvP family. N-terminal subunit subfamily. As to quaternary structure, the glycine cleavage system is composed of four proteins: P, T, L and H. In this organism, the P 'protein' is a heterodimer of two subunits.

The enzyme catalyses N(6)-[(R)-lipoyl]-L-lysyl-[glycine-cleavage complex H protein] + glycine + H(+) = N(6)-[(R)-S(8)-aminomethyldihydrolipoyl]-L-lysyl-[glycine-cleavage complex H protein] + CO2. In terms of biological role, the glycine cleavage system catalyzes the degradation of glycine. The P protein binds the alpha-amino group of glycine through its pyridoxal phosphate cofactor; CO(2) is released and the remaining methylamine moiety is then transferred to the lipoamide cofactor of the H protein. This is Probable glycine dehydrogenase (decarboxylating) subunit 1 from Geotalea uraniireducens (strain Rf4) (Geobacter uraniireducens).